A 554-amino-acid chain; its full sequence is Glucose-6-phosphate isomerase (554 aa).

Glu-359 functions as the Proton donor in the catalytic mechanism. Active-site residues include His-390 and Lys-518.

Belongs to the GPI family.

The protein resides in the cytoplasm. The catalysed reaction is alpha-D-glucose 6-phosphate = beta-D-fructose 6-phosphate. Its pathway is carbohydrate biosynthesis; gluconeogenesis. The protein operates within carbohydrate degradation; glycolysis; D-glyceraldehyde 3-phosphate and glycerone phosphate from D-glucose: step 2/4. Functionally, catalyzes the reversible isomerization of glucose-6-phosphate to fructose-6-phosphate. This chain is Glucose-6-phosphate isomerase, found in Pseudomonas syringae pv. tomato (strain ATCC BAA-871 / DC3000).